The primary structure comprises 143 residues: uncharacterized protein (143 aa).

4 helical membrane-spanning segments follow: residues 7-29 (LFLF…LSLV), 52-74 (FSLY…NTYL), 87-105 (LGVF…LWAG), and 120-142 (WLGI…IRLG).

The protein localises to the cell membrane. This is an uncharacterized protein from Aquifex aeolicus (strain VF5).